The following is a 241-amino-acid chain: Homeobox protein TGIF2LX (241 aa).

Disordered stretches follow at residues 1-58 (MEAA…GNLP) and 126-210 (TGKD…SPEE). Over residues 21–39 (AKTQSPAQDTSIMSRNNAD) the composition is skewed to polar residues. The homeobox; TALE-type DNA-binding region spans 48–111 (EHKKKRKGNL…INARRRILPD (64 aa)). The segment covering 195 to 206 (VSVTSPSSPELV) has biased composition (low complexity).

Belongs to the TALE/TGIF homeobox family. As to expression, specifically expressed in adult testis.

The protein resides in the nucleus. Functionally, may have a transcription role in testis. This chain is Homeobox protein TGIF2LX (TGIF2LX), found in Homo sapiens (Human).